The following is a 316-amino-acid chain: MSKKEQSLMTPYLQFNRSQWAALRDSVPMTLTEGEIARLKGINEDLSLEEVAEIYLPLSRLLNFYISSNLRRQAVLEQFLGTNGQRIPYIISIAGSVAVGKSTTARVLQALLSRWPEHRSVELITTDGFLHPNEVLKERGLMKKKGFPLSYDMHRLVKFVSDLKSGAPNVTAPVYSHLIYDRIPDGDKTVAQPDILILEGLNVLQSGMDYPHDPHHVFVSDFVDFSIYVDAPENLLQNWYINRFLKFREGAFTDPDSYFHNYAQLSEAEAVNVATALWNEINYVNLKENILPTRERASLILTKSENHAVDQVRLRK.

An ATP-binding site is contributed by 95–102 (GSVAVGKS).

It belongs to the prokaryotic pantothenate kinase family.

Its subcellular location is the cytoplasm. It catalyses the reaction (R)-pantothenate + ATP = (R)-4'-phosphopantothenate + ADP + H(+). Its pathway is cofactor biosynthesis; coenzyme A biosynthesis; CoA from (R)-pantothenate: step 1/5. The protein is Pantothenate kinase of Enterobacter sp. (strain 638).